We begin with the raw amino-acid sequence, 1531 residues long: Lysophospholipase nte1 (1531 aa).

Over 1 to 72 the chain is Cytoplasmic; the sequence is MATGDGIIAA…TPPAPSTMVG (72 aa). A helical membrane pass occupies residues 73-93; sequence WIGWIFSFIFQVIPSVLYWIV. The Lumenal portion of the chain corresponds to 94-115; the sequence is TFTTITLPTWLFTLFSMSLTFT. Residues 116-136 form a helical membrane-spanning segment; sequence MNFTTLLLIALAVVSTISWFI. The Cytoplasmic portion of the chain corresponds to 137–1531; the sequence is RYRFLNMYSR…RTLAPRRASI (1395 aa). Disordered regions lie at residues 242–265, 303–385, and 766–789; these read GSDE…PDGR, ASSA…TRRK, and NTSS…KQSR. Residues 325 to 343 are compositionally biased toward basic and acidic residues; sequence REMDDSPHVYQGDRLDPAS. A nucleoside 3',5'-cyclic phosphate is bound by residues 689–809 and 849–969; these read GGTS…AVAS and RLTS…IAQR. Low complexity predominate over residues 768 to 779; sequence SSSRVSGSAAAA. The PNPLA domain occupies 1228 to 1392; that stretch reads LVLGGGGARG…IDNLTVDHMK (165 aa). Positions 1232–1237 match the GXGXXG motif; sequence GGGARG. Residues 1259–1263 carry the GXSXG motif; sequence GTSIG. Serine 1261 serves as the catalytic Nucleophile. Aspartate 1379 (proton acceptor) is an active-site residue. The DGA/G motif lies at 1379-1381; sequence DGG. The interval 1510 to 1531 is disordered; it reads LPEETEEKKKLQRTLAPRRASI.

Belongs to the NTE family.

It localises to the endoplasmic reticulum membrane. The catalysed reaction is a 1-acyl-sn-glycero-3-phosphocholine + H2O = sn-glycerol 3-phosphocholine + a fatty acid + H(+). Inhibited by organophosphorus esters. Functionally, intracellular phospholipase B that catalyzes the double deacylation of phosphatidylcholine (PC) to glycerophosphocholine (GroPCho). Plays an important role in membrane lipid homeostasis. Responsible for the rapid PC turnover in response to inositol, elevated temperatures, or when choline is present in the growth medium. The sequence is that of Lysophospholipase nte1 (nte1) from Aspergillus niger (strain ATCC MYA-4892 / CBS 513.88 / FGSC A1513).